A 286-amino-acid polypeptide reads, in one-letter code: Phosphatidylserine decarboxylase proenzyme (286 aa).

Active-site charge relay system; for autoendoproteolytic cleavage activity residues include Asp-90, His-147, and Ser-252. Catalysis depends on Ser-252, which acts as the Schiff-base intermediate with substrate; via pyruvic acid; for decarboxylase activity. Residue Ser-252 is modified to Pyruvic acid (Ser); by autocatalysis.

Belongs to the phosphatidylserine decarboxylase family. PSD-B subfamily. Prokaryotic type I sub-subfamily. As to quaternary structure, heterodimer of a large membrane-associated beta subunit and a small pyruvoyl-containing alpha subunit. Pyruvate is required as a cofactor. In terms of processing, is synthesized initially as an inactive proenzyme. Formation of the active enzyme involves a self-maturation process in which the active site pyruvoyl group is generated from an internal serine residue via an autocatalytic post-translational modification. Two non-identical subunits are generated from the proenzyme in this reaction, and the pyruvate is formed at the N-terminus of the alpha chain, which is derived from the carboxyl end of the proenzyme. The autoendoproteolytic cleavage occurs by a canonical serine protease mechanism, in which the side chain hydroxyl group of the serine supplies its oxygen atom to form the C-terminus of the beta chain, while the remainder of the serine residue undergoes an oxidative deamination to produce ammonia and the pyruvoyl prosthetic group on the alpha chain. During this reaction, the Ser that is part of the protease active site of the proenzyme becomes the pyruvoyl prosthetic group, which constitutes an essential element of the active site of the mature decarboxylase.

It localises to the cell membrane. The catalysed reaction is a 1,2-diacyl-sn-glycero-3-phospho-L-serine + H(+) = a 1,2-diacyl-sn-glycero-3-phosphoethanolamine + CO2. It functions in the pathway phospholipid metabolism; phosphatidylethanolamine biosynthesis; phosphatidylethanolamine from CDP-diacylglycerol: step 2/2. In terms of biological role, catalyzes the formation of phosphatidylethanolamine (PtdEtn) from phosphatidylserine (PtdSer). The polypeptide is Phosphatidylserine decarboxylase proenzyme (Azotobacter vinelandii (strain DJ / ATCC BAA-1303)).